We begin with the raw amino-acid sequence, 96 residues long: Mapk-regulated corepressor-interacting protein 1 (96 aa).

Disordered stretches follow at residues 1-28 and 76-96; these read MASSPVSRVVYNGKRSGGPRSPGAGSEI and AFKPVDLSDLKRRNTQDAKKS. Positions 79–83 match the PXDLS motif motif; the sequence is PVDLS. Basic and acidic residues predominate over residues 81–96; it reads DLSDLKRRNTQDAKKS.

It belongs to the MCRIP family.

The protein localises to the nucleus. It is found in the cytoplasm. The protein resides in the stress granule. In terms of biological role, may play a role in the regulation of the epithelial-mesenchymal transition. The chain is Mapk-regulated corepressor-interacting protein 1 (MCRIP1) from Gallus gallus (Chicken).